Here is a 467-residue protein sequence, read N- to C-terminus: Microtubule-associated tyrosine carboxypeptidase 1 (467 aa).

Residues 1–10 show a composition bias toward polar residues; the sequence is MVLDSGTQVY. 2 disordered regions span residues 1–40 and 77–111; these read MVLD…PLYP and MRRS…TLRP. Residue His-276 participates in Zn(2+) binding. The active-site Nucleophile is Glu-277. Zn(2+)-binding residues include His-281 and Glu-312.

It belongs to the peptidase MATCAP family. Requires Zn(2+) as cofactor.

It localises to the cytoplasm. It is found in the cytoskeleton. It catalyses the reaction C-terminal L-alpha-aminoacyl-L-glutamyl-L-glutamyl-L-tyrosyl-[tubulin] + H2O = C-terminal L-alpha-aminoacyl-L-glutamyl-L-glutamyl-[tubulin] + L-tyrosine. The catalysed reaction is C-terminal L-alpha-aminoacyl-L-glutamyl-L-glutamyl-L-phenylalanyl-[tubulin] + H2O = C-terminal L-alpha-aminoacyl-L-glutamyl-L-glutamyl-[tubulin] + L-phenylalanine. Its function is as follows. Tyrosine carboxypeptidase that removes the C-terminal tyrosine residue of alpha-tubulin, thereby regulating microtubule dynamics and function. Also able to remove the C-terminal phenylalanine residue of alpha-tubulin TUBA8. Recognizes adjacent tubulin dimers along the same protofilament. This chain is Microtubule-associated tyrosine carboxypeptidase 1, found in Mus musculus (Mouse).